Here is a 200-residue protein sequence, read N- to C-terminus: ATP synthase subunit s, mitochondrial (200 aa).

Residues 1–25 (MMLFGKVSQQLCGIKKLPWSCDSRY) constitute a mitochondrion transit peptide. An N-terminal domain region spans residues 1-61 (MMLFGKVSQQ…SEWLLRCGAM (61 aa)). Residue Gly-59 participates in Mg(2+) binding. LRR repeat units lie at residues 62 to 87 (VRYH…KYKI), 88 to 116 (QAID…KIRL), 117 to 141 (CKCH…KSIL), and 142 to 173 (EMEI…LSDL). Thr-93 contributes to the Mg(2+) binding site.

It belongs to the ATP synthase subunit s family. In terms of assembly, homotetramer. Associates with ATP synthase.

It is found in the mitochondrion. Its subcellular location is the mitochondrion inner membrane. Involved in regulation of mitochondrial membrane ATP synthase. Necessary for H(+) conduction of ATP synthase. Facilitates energy-driven catalysis of ATP synthesis by blocking a proton leak through an alternative proton exit pathway. This chain is ATP synthase subunit s, mitochondrial (DMAC2L), found in Macaca fascicularis (Crab-eating macaque).